Here is a 361-residue protein sequence, read N- to C-terminus: MATLSFRNLKKTYAGNVPVIHGIDMEIKDGEFIVIVGPSGCGKSTLMRMVAGLETVTSGEILIDDKPVNDLEPAERDIAMVFQNYALYPHMSVFENMAYGLKIRKVPKAEIQKRVEEAAQILELGKLLDRRPRQLSGGQRQRVAMGRAIVREPKVFLFDEPLSNLDAKLRVAMRLEILKLHRRLHTTSLYVTHDQVEAMTLAHRMVVMYQGVPEQIGTPMEVFEKPASTFVAGFIGSPPMNLIEVDVAGDGTMTAEGMPLQISPLQVPSAVRGRKIIMGLRPEHMLLNAEGIPVEIEMIETLGSEQLVHGRRGKHMLVVRCTTRQLSESTVKVGDTMNIGPDGRHDLHWFEPDTGRRVQGL.

Residues 4-235 form the ABC transporter domain; sequence LSFRNLKKTY…PASTFVAGFI (232 aa). Position 37–44 (37–44) interacts with ATP; it reads GPSGCGKS.

The protein belongs to the ABC transporter superfamily. sn-glycerol-3-phosphate importer (TC 3.A.1.1.3) family. In terms of assembly, the complex is composed of two ATP-binding proteins (UgpC), two transmembrane proteins (UgpA and UgpE) and a solute-binding protein (UgpB).

Its subcellular location is the cell inner membrane. The enzyme catalyses sn-glycerol 3-phosphate(out) + ATP + H2O = sn-glycerol 3-phosphate(in) + ADP + phosphate + H(+). Its function is as follows. Part of the ABC transporter complex UgpBAEC involved in sn-glycerol-3-phosphate (G3P) import. Responsible for energy coupling to the transport system. The protein is sn-glycerol-3-phosphate import ATP-binding protein UgpC of Bordetella avium (strain 197N).